The sequence spans 281 residues: MKQFSAKFALALSAAAGQALAASTQGISEDLYNRLVEMATISQAAYANMCNIPSTITVGEKIYNAQTDINGWVLRDDSTKEIITVFRGTGSDTNLQLDTNYTLTPFSTFSECSGCEVHGGYFIGWSSVQDQVMSLVKEQADQYPDYTLTVTGHSLGASMATLAAAQLSGTYDNITLYTFGEPRSGNEAFASYMNDKFTATSADTTKYFRVTHSNDGIPNLPPAEQGYVHGGVEYWSVDPYSAQNTYVCTGDEVQCCEAQGGQGVNDAHTTYFGMTSGACTW.

An N-terminal signal peptide occupies residues 1-21 (MKQFSAKFALALSAAAGQALA). Intrachain disulfides connect C50–C279, C112–C115, and C248–C255. Residue D98 coordinates substrate. Residue N100 is glycosylated (N-linked (GlcNAc...) asparagine). A substrate-binding site is contributed by Y101. Catalysis depends on S154, which acts as the Nucleophile. Residue N173 is glycosylated (N-linked (GlcNAc...) asparagine). D215 functions as the Charge relay system in the catalytic mechanism. Residue H268 participates in substrate binding. The active-site Charge relay system is H268.

The protein belongs to the AB hydrolase superfamily. FaeA family.

It is found in the secreted. The catalysed reaction is feruloyl-polysaccharide + H2O = ferulate + polysaccharide.. In terms of biological role, involved in degradation of plant cell walls. Hydrolyzes the feruloyl-arabinose ester bond in arabinoxylans, and the feruloyl-galactose ester bond in pectin. The sequence is that of Probable feruloyl esterase A (faeA) from Aspergillus terreus (strain NIH 2624 / FGSC A1156).